A 440-amino-acid polypeptide reads, in one-letter code: Chromosome partition protein MukF (440 aa).

The segment at 208 to 236 (LSETSGTLRELQDTLEAAGDKLQANLLRI) is leucine-zipper.

The protein belongs to the MukF family. Interacts, and probably forms a ternary complex, with MukE and MukB via its C-terminal region. The complex formation is stimulated by calcium or magnesium. It is required for an interaction between MukE and MukB.

Its subcellular location is the cytoplasm. It localises to the nucleoid. In terms of biological role, involved in chromosome condensation, segregation and cell cycle progression. May participate in facilitating chromosome segregation by condensation DNA from both sides of a centrally located replisome during cell division. Not required for mini-F plasmid partitioning. Probably acts via its interaction with MukB and MukE. Overexpression results in anucleate cells. It has a calcium binding activity. This Salmonella gallinarum (strain 287/91 / NCTC 13346) protein is Chromosome partition protein MukF.